Consider the following 538-residue polypeptide: Methyl-accepting chemotaxis protein NahY (538 aa).

Residues 1–9 (MQQFTIRTR) are Cytoplasmic-facing. The helical transmembrane segment at 10-30 (LLMLVGAMFIGFITIELMGFS) threads the bilayer. Over 31 to 187 (ALQRGVASLN…AVVLYDSSRT (157 aa)) the chain is Periplasmic. Residues 188–208 (MLALLLLGILICGGVFATRLI) form a helical membrane-spanning segment. Residues 209–261 (RSIIHPLTTLKDAAARVALGDLSQSIQVSGRNEVTDVQQSVQAMQANLRNTLQ) form the HAMP domain. Topologically, residues 209–538 (RSIIHPLTTL…LNNLVNRFSM (330 aa)) are cytoplasmic. In terms of domain architecture, Methyl-accepting transducer spans 266 to 502 (SAAQLAAAAE…EVDRNLVAIS (237 aa)).

The protein belongs to the methyl-accepting chemotaxis (MCP) protein family.

It localises to the cell inner membrane. In terms of biological role, chemotactic-signal transducers respond to changes in the concentration of attractants and repellents in the environment, transduce a signal from the outside to the inside of the cell, and facilitate sensory adaptation through the variation of the level of methylation. Chemoreceptor for naphthalene or a related compound. May facilitate biodegradation. This chain is Methyl-accepting chemotaxis protein NahY (nahY), found in Pseudomonas putida (Arthrobacter siderocapsulatus).